A 446-amino-acid polypeptide reads, in one-letter code: N-succinylarginine dihydrolase (446 aa).

Residues 19–28 (AGLSFGNVAS), N110, and 137–138 (HR) contribute to the substrate site. The active site involves E174. A substrate-binding site is contributed by R213. The active site involves H249. Positions 251 and 364 each coordinate substrate. The active-site Nucleophile is the C370.

The protein belongs to the succinylarginine dihydrolase family. Homodimer.

The enzyme catalyses N(2)-succinyl-L-arginine + 2 H2O + 2 H(+) = N(2)-succinyl-L-ornithine + 2 NH4(+) + CO2. The protein operates within amino-acid degradation; L-arginine degradation via AST pathway; L-glutamate and succinate from L-arginine: step 2/5. Its function is as follows. Catalyzes the hydrolysis of N(2)-succinylarginine into N(2)-succinylornithine, ammonia and CO(2). The sequence is that of N-succinylarginine dihydrolase from Paraburkholderia xenovorans (strain LB400).